We begin with the raw amino-acid sequence, 92 residues long: MKTIIWPTYINSEHSRGEGRKLSLEESVEEPKIREISQSLKKLKIQYVVEHNKSYPGSWWEKSGRVVVEQEDMTKLELLRAIAKNIKNSRNN.

The protein belongs to the SRP19 family. Part of the signal recognition particle protein translocation system, which is composed of SRP and FtsY. Archaeal SRP consists of a 7S RNA molecule of 300 nucleotides and two protein subunits: SRP54 and SRP19.

It localises to the cytoplasm. In terms of biological role, involved in targeting and insertion of nascent membrane proteins into the cytoplasmic membrane. Binds directly to 7S RNA and mediates binding of the 54 kDa subunit of the SRP. This Methanosphaera stadtmanae (strain ATCC 43021 / DSM 3091 / JCM 11832 / MCB-3) protein is Signal recognition particle 19 kDa protein.